The primary structure comprises 327 residues: Sideroflexin-2 (327 aa).

5 helical membrane-spanning segments follow: residues 99-119 (GMLI…VVLW), 143-163 (VTQL…AAIG), 175-195 (LFQR…NIPL), 228-248 (EVVV…PLIM), and 267-287 (FQTL…CALF).

The protein belongs to the sideroflexin family.

The protein localises to the mitochondrion membrane. The catalysed reaction is L-serine(in) = L-serine(out). In terms of biological role, mitochondrial amino-acid transporter that mediates transport of serine into mitochondria. The chain is Sideroflexin-2 from Drosophila melanogaster (Fruit fly).